Here is a 151-residue protein sequence, read N- to C-terminus: UPF0719 transmembrane protein MAP_1032c (151 aa).

A run of 4 helical transmembrane segments spans residues 20–40 (VATI…FYAV), 60–80 (AVVV…TAIA), 90–110 (LVGV…ALLA), and 130–150 (PGSF…AAAV).

The protein belongs to the UPF0719 family.

It localises to the cell membrane. The protein is UPF0719 transmembrane protein MAP_1032c of Mycolicibacterium paratuberculosis (strain ATCC BAA-968 / K-10) (Mycobacterium paratuberculosis).